Here is a 486-residue protein sequence, read N- to C-terminus: N-succinylglutamate 5-semialdehyde dehydrogenase (486 aa).

220-225 (GSSRTG) is an NAD(+) binding site. Residues Glu243 and Cys277 contribute to the active site.

It belongs to the aldehyde dehydrogenase family. AstD subfamily.

The enzyme catalyses N-succinyl-L-glutamate 5-semialdehyde + NAD(+) + H2O = N-succinyl-L-glutamate + NADH + 2 H(+). It functions in the pathway amino-acid degradation; L-arginine degradation via AST pathway; L-glutamate and succinate from L-arginine: step 4/5. Catalyzes the NAD-dependent reduction of succinylglutamate semialdehyde into succinylglutamate. In Shewanella baltica (strain OS223), this protein is N-succinylglutamate 5-semialdehyde dehydrogenase.